The following is a 499-amino-acid chain: Endoglucanase 3 (499 aa).

An N-terminal signal peptide occupies residues 1 to 19 (MALLRCLFLLAVLLPHRNA). Asp-88 acts as the Nucleophile in catalysis. Catalysis depends on residues His-416, Asp-467, and Glu-476.

It belongs to the glycosyl hydrolase 9 (cellulase E) family. Expressed in flowers.

It is found in the secreted. The catalysed reaction is Endohydrolysis of (1-&gt;4)-beta-D-glucosidic linkages in cellulose, lichenin and cereal beta-D-glucans.. This chain is Endoglucanase 3 (GLU8), found in Oryza sativa subsp. japonica (Rice).